Reading from the N-terminus, the 459-residue chain is U-box domain-containing protein 75 (459 aa).

Residues 64–138 form the U-box domain; that stretch reads AVPAVFICPI…AAWFSRRYTR (75 aa). 2 ARM repeats span residues 188–229 and 231–270; these read QSVT…GVPL and ADAK…ILME.

Interacts with GPA1. Expressed highly in panicles at flowering time, at moderate levels in vegetative shoot apices, leaf sheaths, leaf blades, and elongating internodes, and at low levels in roots.

It is found in the cell membrane. It carries out the reaction S-ubiquitinyl-[E2 ubiquitin-conjugating enzyme]-L-cysteine + [acceptor protein]-L-lysine = [E2 ubiquitin-conjugating enzyme]-L-cysteine + N(6)-ubiquitinyl-[acceptor protein]-L-lysine.. Its pathway is protein modification; protein ubiquitination. Functionally, E3 ubiquitin ligase that may function as positive regulator of brassinosteroid (BR) signaling. Possesses E3 ubiquitin ligase in vitro. Acts together with the heterotrimeric G alpha subunit GPA1 at the plasma membrane to mediate a BR signaling pathway that affects plant growth and development. Does not seem to be involved in gibberellin or cytokinin responses. The protein is U-box domain-containing protein 75 of Oryza sativa subsp. japonica (Rice).